The sequence spans 88 residues: Small ribosomal subunit protein eS25B (88 aa).

This sequence belongs to the eukaryotic ribosomal protein eS25 family. In terms of assembly, component of the small ribosomal subunit (SSU). Mature yeast ribosomes consist of a small (40S) and a large (60S) subunit. The 40S small subunit contains 1 molecule of ribosomal RNA (18S rRNA) and at least 33 different proteins. The large 60S subunit contains 3 rRNA molecules (25S, 5.8S and 5S rRNA) and at least 46 different proteins.

It localises to the cytoplasm. Functionally, component of the ribosome, a large ribonucleoprotein complex responsible for the synthesis of proteins in the cell. The small ribosomal subunit (SSU) binds messenger RNAs (mRNAs) and translates the encoded message by selecting cognate aminoacyl-transfer RNA (tRNA) molecules. The large subunit (LSU) contains the ribosomal catalytic site termed the peptidyl transferase center (PTC), which catalyzes the formation of peptide bonds, thereby polymerizing the amino acids delivered by tRNAs into a polypeptide chain. The nascent polypeptides leave the ribosome through a tunnel in the LSU and interact with protein factors that function in enzymatic processing, targeting, and the membrane insertion of nascent chains at the exit of the ribosomal tunnel. This is Small ribosomal subunit protein eS25B (rps2501) from Schizosaccharomyces pombe (strain 972 / ATCC 24843) (Fission yeast).